Consider the following 2115-residue polypeptide: Non-reducing polyketide synthase PFUR17_0229 (2115 aa).

Residues 8-246 are N-terminal acylcarrier protein transacylase (SAT) domain (SAT); that stretch reads VLFGDQTVDP…ISLPITAAFH (239 aa). Positions 367-796 constitute a Ketosynthase family 3 (KS3) domain; it reads SGDIAIVGVA…GGNTSLVLED (430 aa). Active-site for beta-ketoacyl synthase activity residues include Cys539, His674, and His713. The segment at 895-1218 is malonyl-CoA:ACP transacylase (MAT) domain; sequence IFAFTGQGAQ…SISNAYNSGA (324 aa). The segment at 1279-1592 is product template (PT) domain; that stretch reads TTCLQKVESE…KRNILQSLLS (314 aa). Residues 1282-1413 are N-terminal hotdog fold; the sequence is LQKVESETFT…CTVMYGDGQQ (132 aa). The PKS/mFAS DH domain occupies 1282-1588; it reads LQKVESETFT…FQKMKRNILQ (307 aa). The active-site Proton acceptor; for dehydratase activity is the His1315. The interval 1441 to 1588 is C-terminal hotdog fold; that stretch reads VHRLLKEMIY…FQKMKRNILQ (148 aa). Asp1501 acts as the Proton donor; for dehydratase activity in catalysis. The segment at 1594–1613 is disordered; that stretch reads GHEETPPARPVPSKRTVQGS. The 78-residue stretch at 1626–1703 folds into the Carrier 1 domain; the sequence is KAASGGFSNI…QLRNFFLDKV (78 aa). O-(pantetheine 4'-phosphoryl)serine is present on Ser1663. The segment at 1710–1742 is disordered; the sequence is FDDEESEMSSSTAGSTPGSSTSHGNQNTTVTTP. The segment covering 1718-1733 has biased composition (low complexity); that stretch reads SSSTAGSTPGSSTSHG. In terms of domain architecture, Carrier 2 spans 1742 to 1819; sequence PAEPDVVAIL…DVQKALGVPS (78 aa). Ser1779 is subject to O-(pantetheine 4'-phosphoryl)serine. The interval 1861 to 2097 is thioesterase (TE) domain; the sequence is LFLLPDGAGS…VVGGNHFSIM (237 aa).

Requires pantetheine 4'-phosphate as cofactor.

It carries out the reaction 6 malonyl-CoA + 2 acetyl-CoA + 5 H(+) = o-orsellinate depside + 6 CO2 + 8 CoA + H2O. Non-reducing polyketide synthase; part of a gene cluster that mediates the biosynthesis of a yet unidentified depside/depsidone compound. The first step in the pathway is performed by the PKS PFUR17_0229 that condenses 2 acetyl-CoA starter units with 6 malonyl-CoA units to produce lecanoric acid (LA), also known as orsellinate depside. The biosynthesis occurs via the formation of 2 orsellinate intermediates fused together by the C-terminal thioesterase (TE) domain that finally releases lecanoric acid. In addition to the PKS gene, the PFUR17 gene cluster contains closely linked genes encoding a cytochrome P-450 and a laccase (phenol oxidase), directly upstream and downstream respectively, so it is likely that lecanoric acid is an intermediate in a longer biosynthetic pathway. The polypeptide is Non-reducing polyketide synthase PFUR17_0229 (Pseudevernia furfuracea (Tree moss)).